Reading from the N-terminus, the 336-residue chain is tRNA-splicing endonuclease (336 aa).

Residues Tyr271, His282, and Lys313 contribute to the active site.

Belongs to the tRNA-intron endonuclease family. Archaeal long subfamily. Homodimer.

The enzyme catalyses pretRNA = a 3'-half-tRNA molecule with a 5'-OH end + a 5'-half-tRNA molecule with a 2',3'-cyclic phosphate end + an intron with a 2',3'-cyclic phosphate and a 5'-hydroxyl terminus.. Functionally, endonuclease that removes tRNA introns. Cleaves pre-tRNA at the 5'- and 3'-splice sites to release the intron. The products are an intron and two tRNA half-molecules bearing 2',3' cyclic phosphate and 5'-OH termini. Recognizes a pseudosymmetric substrate in which 2 bulged loops of 3 bases are separated by a stem of 4 bp. The sequence is that of tRNA-splicing endonuclease from Natronomonas pharaonis (strain ATCC 35678 / DSM 2160 / CIP 103997 / JCM 8858 / NBRC 14720 / NCIMB 2260 / Gabara) (Halobacterium pharaonis).